The sequence spans 93 residues: Putative pterin-4-alpha-carbinolamine dehydratase (93 aa).

The protein belongs to the pterin-4-alpha-carbinolamine dehydratase family.

It catalyses the reaction (4aS,6R)-4a-hydroxy-L-erythro-5,6,7,8-tetrahydrobiopterin = (6R)-L-erythro-6,7-dihydrobiopterin + H2O. In Trichormus variabilis (strain ATCC 29413 / PCC 7937) (Anabaena variabilis), this protein is Putative pterin-4-alpha-carbinolamine dehydratase.